A 199-amino-acid chain; its full sequence is MTATWKGRLGMSVAAVKDLTMTIAYDLKASVRTIPDYPKPGILFRDITTLLGDARSFRCAIDELVQPWAGSKIDKVAGIEARGFIIGGAIAHQVSSGFVPIRKKGKLPHTTVSMSYALEYGSDIIEMHVDAIKPGERVILVDDLIATGGTAEGAIKLLRQTGAEIVAACFIIDLPELGGAAKIRDMGVPVRALMEFEGH.

Belongs to the purine/pyrimidine phosphoribosyltransferase family. In terms of assembly, homodimer.

It localises to the cytoplasm. It catalyses the reaction AMP + diphosphate = 5-phospho-alpha-D-ribose 1-diphosphate + adenine. It functions in the pathway purine metabolism; AMP biosynthesis via salvage pathway; AMP from adenine: step 1/1. Catalyzes a salvage reaction resulting in the formation of AMP, that is energically less costly than de novo synthesis. This chain is Adenine phosphoribosyltransferase, found in Rhodopseudomonas palustris (strain BisB18).